We begin with the raw amino-acid sequence, 138 residues long: Protein NrdI (138 aa).

This sequence belongs to the NrdI family.

In terms of biological role, probably involved in ribonucleotide reductase function. This Mycobacterium leprae (strain TN) protein is Protein NrdI.